We begin with the raw amino-acid sequence, 336 residues long: MAAVQAPGEKINILAGETAKVGDPQKNEWPEQDRLPERSWRHKCASYVLALRPWSFSASLTPVALGSALAYRSQGVLDPRLLLGCAVAVLAVHGAGNLVNTYYDFSKGIDHKKSDDRTLVDRILEPQDVVRFGVFLYTLGCVCAACLYYLSALKLEHLALIYFGGLSGSFLYTGGIGFKYVALGDLVILITFGPLAVMFAYAVQVGSLAIFPLIYAIPLALSTEAILHSNNTRDMESDREAGIVTLAILIGPTFSYVLYNTLLFVPYLIFTILATHCSISLALPLLTIPMAFSLERQFRSQAFNKLPQRTAKLNLLLGLFYVFGIILAPAGSLPRL.

An N-acetylalanine modification is found at Ala2. 8 helical membrane passes run 81–101 (LLLG…LVNT), 132–152 (FGVF…YLSA), 158–178 (LALI…GIGF), 186–206 (LVIL…VQVG), 207–227 (SLAI…EAIL), 243–265 (IVTL…LLFV), 275–295 (THCS…FSLE), and 313–333 (LNLL…AGSL).

This sequence belongs to the UbiA prenyltransferase family. Interacts with HMGCR and SOAT1.

It is found in the endoplasmic reticulum membrane. The protein localises to the golgi apparatus membrane. It localises to the mitochondrion membrane. The catalysed reaction is menadiol + (2E,6E,10E)-geranylgeranyl diphosphate = menaquinol-4 + diphosphate. The enzyme catalyses all-trans-decaprenyl diphosphate + 4-hydroxybenzoate = 4-hydroxy-3-(all-trans-decaprenyl)benzoate + diphosphate. It functions in the pathway quinol/quinone metabolism; menaquinone biosynthesis. The protein operates within cofactor biosynthesis; ubiquinone biosynthesis. Functionally, prenyltransferase that mediates the formation of menaquinone-4 (MK-4) and coenzyme Q10. MK-4 is a vitamin K2 isoform required for endothelial cell development. Mediates the conversion of phylloquinone (PK) into MK-4, probably by cleaving the side chain of phylloquinone (PK) to release 2-methyl-1,4-naphthoquinone (menadione; K3) and then prenylating it with geranylgeranyl pyrophosphate (GGPP) to form MK-4. Also plays a role in cardiovascular development independently of MK-4 biosynthesis, by acting as a coenzyme Q10 biosynthetic enzyme: coenzyme Q10, also named ubiquinone, plays an important antioxidant role in the cardiovascular system. Mediates biosynthesis of coenzyme Q10 in the Golgi membrane, leading to protect cardiovascular tissues from NOS3/eNOS-dependent oxidative stress. The chain is UbiA prenyltransferase domain-containing protein 1 (Ubiad1) from Mus musculus (Mouse).